The primary structure comprises 526 residues: Bifunctional purine biosynthesis protein PurH (526 aa).

The MGS-like domain occupies 1-147; sequence MSSIKRALIS…KNWKHVAIVT (147 aa).

This sequence belongs to the PurH family.

The catalysed reaction is (6R)-10-formyltetrahydrofolate + 5-amino-1-(5-phospho-beta-D-ribosyl)imidazole-4-carboxamide = 5-formamido-1-(5-phospho-D-ribosyl)imidazole-4-carboxamide + (6S)-5,6,7,8-tetrahydrofolate. It carries out the reaction IMP + H2O = 5-formamido-1-(5-phospho-D-ribosyl)imidazole-4-carboxamide. Its pathway is purine metabolism; IMP biosynthesis via de novo pathway; 5-formamido-1-(5-phospho-D-ribosyl)imidazole-4-carboxamide from 5-amino-1-(5-phospho-D-ribosyl)imidazole-4-carboxamide (10-formyl THF route): step 1/1. It functions in the pathway purine metabolism; IMP biosynthesis via de novo pathway; IMP from 5-formamido-1-(5-phospho-D-ribosyl)imidazole-4-carboxamide: step 1/1. This chain is Bifunctional purine biosynthesis protein PurH, found in Neisseria meningitidis serogroup B (strain ATCC BAA-335 / MC58).